We begin with the raw amino-acid sequence, 242 residues long: Carboxy-S-adenosyl-L-methionine synthase (242 aa).

S-adenosyl-L-methionine is bound by residues Tyr-39, 64-66, 89-90, 117-118, Asn-132, and Arg-199; these read GCS, DN, and DI.

It belongs to the class I-like SAM-binding methyltransferase superfamily. Cx-SAM synthase family. Homodimer.

The enzyme catalyses prephenate + S-adenosyl-L-methionine = carboxy-S-adenosyl-L-methionine + 3-phenylpyruvate + H2O. Catalyzes the conversion of S-adenosyl-L-methionine (SAM) to carboxy-S-adenosyl-L-methionine (Cx-SAM). This chain is Carboxy-S-adenosyl-L-methionine synthase, found in Aliivibrio fischeri (strain MJ11) (Vibrio fischeri).